We begin with the raw amino-acid sequence, 381 residues long: tRNA pseudouridine synthase D (381 aa).

Aspartate 81 functions as the Nucleophile in the catalytic mechanism. A TRUD domain is found at 160–335; sequence GMPNYFGSQR…TLGSRRFFWV (176 aa).

This sequence belongs to the pseudouridine synthase TruD family.

It carries out the reaction uridine(13) in tRNA = pseudouridine(13) in tRNA. In terms of biological role, responsible for synthesis of pseudouridine from uracil-13 in transfer RNAs. This Helicobacter pylori (strain ATCC 700392 / 26695) (Campylobacter pylori) protein is tRNA pseudouridine synthase D.